The sequence spans 102 residues: ATP-dependent Clp protease adapter protein ClpS (102 aa).

The protein belongs to the ClpS family. Binds to the N-terminal domain of the chaperone ClpA.

Its function is as follows. Involved in the modulation of the specificity of the ClpAP-mediated ATP-dependent protein degradation. The chain is ATP-dependent Clp protease adapter protein ClpS from Wolinella succinogenes (strain ATCC 29543 / DSM 1740 / CCUG 13145 / JCM 31913 / LMG 7466 / NCTC 11488 / FDC 602W) (Vibrio succinogenes).